The following is a 98-amino-acid chain: MPSISTNIILAFITALLGMLIFRSHLMSSLLCLEGMMLSMFILSTLTILSLHFTTSFMMPILLLVFAACEAAVGLALLVTVSNTYGLDYIQNLNLLQC.

3 consecutive transmembrane segments (helical) span residues 2 to 22 (PSIS…MLIF), 29 to 49 (SLLC…LTIL), and 61 to 81 (ILLL…LVTV).

Belongs to the complex I subunit 4L family. Core subunit of respiratory chain NADH dehydrogenase (Complex I) which is composed of 45 different subunits.

It localises to the mitochondrion inner membrane. It carries out the reaction a ubiquinone + NADH + 5 H(+)(in) = a ubiquinol + NAD(+) + 4 H(+)(out). Functionally, core subunit of the mitochondrial membrane respiratory chain NADH dehydrogenase (Complex I) which catalyzes electron transfer from NADH through the respiratory chain, using ubiquinone as an electron acceptor. Part of the enzyme membrane arm which is embedded in the lipid bilayer and involved in proton translocation. In Lemur catta (Ring-tailed lemur), this protein is NADH-ubiquinone oxidoreductase chain 4L (MT-ND4L).